The following is a 244-amino-acid chain: tRNA pseudouridine synthase A (244 aa).

Asp-52 acts as the Nucleophile in catalysis. Tyr-110 contributes to the substrate binding site.

It belongs to the tRNA pseudouridine synthase TruA family. Homodimer.

The enzyme catalyses uridine(38/39/40) in tRNA = pseudouridine(38/39/40) in tRNA. Its function is as follows. Formation of pseudouridine at positions 38, 39 and 40 in the anticodon stem and loop of transfer RNAs. This Thermoanaerobacter pseudethanolicus (strain ATCC 33223 / 39E) (Clostridium thermohydrosulfuricum) protein is tRNA pseudouridine synthase A.